Here is a 124-residue protein sequence, read N- to C-terminus: Ragulator complex protein LAMTOR3 homolog (124 aa).

This sequence belongs to the LAMTOR3 family. Part of the Ragulator complex composed of Lamtor3, Lamtor2, CG14184, CG14812, and Lamtor4.

In terms of biological role, regulator of the TOR pathway, a signaling cascade that promotes cell growth in response to growth factors, energy levels, and amino acids. As part of the Ragulator complex, may activate the TOR signaling cascade in response to amino acids. This chain is Ragulator complex protein LAMTOR3 homolog, found in Drosophila melanogaster (Fruit fly).